Reading from the N-terminus, the 296-residue chain is 4-hydroxybenzoate octaprenyltransferase (296 aa).

8 consecutive transmembrane segments (helical) span residues 28 to 48, 51 to 71, 102 to 122, 143 to 163, 174 to 194, 212 to 232, 233 to 253, and 274 to 294; these read IGTL…SDGI, LAVL…GCVI, LLLT…LNHL, FFPI…PMAF, AWIL…VYAM, FGRY…LLMA, VLGA…IVLL, and FLAN…HTFF.

It belongs to the UbiA prenyltransferase family. Mg(2+) serves as cofactor.

It is found in the cell inner membrane. The catalysed reaction is all-trans-octaprenyl diphosphate + 4-hydroxybenzoate = 4-hydroxy-3-(all-trans-octaprenyl)benzoate + diphosphate. It functions in the pathway cofactor biosynthesis; ubiquinone biosynthesis. Catalyzes the prenylation of para-hydroxybenzoate (PHB) with an all-trans polyprenyl group. Mediates the second step in the final reaction sequence of ubiquinone-8 (UQ-8) biosynthesis, which is the condensation of the polyisoprenoid side chain with PHB, generating the first membrane-bound Q intermediate 3-octaprenyl-4-hydroxybenzoate. The protein is 4-hydroxybenzoate octaprenyltransferase of Neisseria meningitidis serogroup B (strain ATCC BAA-335 / MC58).